An 827-amino-acid polypeptide reads, in one-letter code: Probable beta-glucosidase H (827 aa).

Asp-223 is a catalytic residue. In terms of domain architecture, PA14 spans 387-546; it reads RLLTNAVMHF…DSAEMVRSAV (160 aa). N-linked (GlcNAc...) asparagine glycans are attached at residues Asn-471, Asn-594, Asn-600, and Asn-625.

This sequence belongs to the glycosyl hydrolase 3 family.

The protein resides in the secreted. It carries out the reaction Hydrolysis of terminal, non-reducing beta-D-glucosyl residues with release of beta-D-glucose.. The protein operates within glycan metabolism; cellulose degradation. Functionally, beta-glucosidases are one of a number of cellulolytic enzymes involved in the degradation of cellulosic biomass. Catalyzes the last step releasing glucose from the inhibitory cellobiose. The protein is Probable beta-glucosidase H (bglH) of Aspergillus oryzae (strain ATCC 42149 / RIB 40) (Yellow koji mold).